A 527-amino-acid chain; its full sequence is Glutamate--cysteine ligase (527 aa).

Belongs to the glutamate--cysteine ligase type 1 family. Type 1 subfamily.

It carries out the reaction L-cysteine + L-glutamate + ATP = gamma-L-glutamyl-L-cysteine + ADP + phosphate + H(+). Its pathway is sulfur metabolism; glutathione biosynthesis; glutathione from L-cysteine and L-glutamate: step 1/2. The sequence is that of Glutamate--cysteine ligase from Pseudomonas aeruginosa (strain LESB58).